Consider the following 814-residue polypeptide: G-type lectin S-receptor-like serine/threonine-protein kinase At1g61370 (814 aa).

The N-terminal stretch at 1 to 25 (MGKIGIVFFASLLFLLIIFPSCAFA) is a signal peptide. A Bulb-type lectin domain is found at 26–145 (AITRASPLSI…VSERNLWESF (120 aa)). The Extracellular portion of the chain corresponds to 26–433 (AITRASPLSI…SELAGSNRVK (408 aa)). Asn43, Asn54, Asn89, Asn95, Asn253, and Asn271 each carry an N-linked (GlcNAc...) asparagine glycan. The region spanning 282–318 (PVSSCDVYNTCGPFGLCIRSNPPKCECLKGFVPKSDE) is the EGF-like domain. 2 disulfide bridges follow: Cys286-Cys298 and Cys292-Cys306. Asn324, Asn334, Asn340, and Asn383 each carry an N-linked (GlcNAc...) asparagine glycan. Positions 337 to 423 (CDVNSSATAQ…GETLSIRLAS (87 aa)) constitute a PAN domain. Cystine bridges form between Cys376–Cys397 and Cys380–Cys386. The chain crosses the membrane as a helical span at residues 434-454 (IIVASIVSISVFMILVFASYW). Residues 455–814 (YWRYKAKQND…NITQTAIVGR (360 aa)) are Cytoplasmic-facing. The 286-residue stretch at 501–786 (FSMENKLGQG…DLPKPKQPVF (286 aa)) folds into the Protein kinase domain. ATP-binding positions include 507–515 (LGQGGFGPV) and Lys529. A phosphoserine mark is found at Ser535 and Ser550. Residues 590–607 (TKKLELDWPKRFEIIQGI) form a caM-binding region. Catalysis depends on Asp626, which acts as the Proton acceptor. A phosphoserine mark is found at Ser630 and Ser643. Position 660 is a phosphothreonine (Thr660). Phosphoserine is present on residues Ser703, Ser704, Ser797, and Ser802. Thr809 is subject to Phosphothreonine.

It belongs to the protein kinase superfamily. Ser/Thr protein kinase family.

It localises to the cell membrane. It catalyses the reaction L-seryl-[protein] + ATP = O-phospho-L-seryl-[protein] + ADP + H(+). It carries out the reaction L-threonyl-[protein] + ATP = O-phospho-L-threonyl-[protein] + ADP + H(+). The chain is G-type lectin S-receptor-like serine/threonine-protein kinase At1g61370 from Arabidopsis thaliana (Mouse-ear cress).